The primary structure comprises 592 residues: A-type ATP synthase subunit A (592 aa).

Residue 233 to 240 (GPFGSGKT) participates in ATP binding.

This sequence belongs to the ATPase alpha/beta chains family. As to quaternary structure, has multiple subunits with at least A(3), B(3), C, D, E, F, H, I and proteolipid K(x).

Its subcellular location is the cell membrane. The catalysed reaction is ATP + H2O + 4 H(+)(in) = ADP + phosphate + 5 H(+)(out). Its function is as follows. Component of the A-type ATP synthase that produces ATP from ADP in the presence of a proton gradient across the membrane. The A chain is the catalytic subunit. The sequence is that of A-type ATP synthase subunit A from Saccharolobus islandicus (strain L.S.2.15 / Lassen #1) (Sulfolobus islandicus).